The following is a 671-amino-acid chain: cGMP-dependent protein kinase 1 (671 aa).

N-acetylserine is present on Ser2. A coiled-coil region spans residues 2-59; sequence SELEEDFAKILMLKEERIKELEKRLSEKEEEIQELKRKLHKCQSVLPVPSTHIGPRTT. Residues 2 to 102 are required for dimerization; sequence SELEEDFAKI…LIKEAILDND (101 aa). The interval 9 to 44 is leucine-zipper; it reads AKILMLKEERIKELEKRLSEKEEEIQELKRKLHKCQ. Positions 50 to 75 are autoinhibitory domain; it reads PSTHIGPRTTRAQGISAEPQTYRSFH. The residue at position 59 (Thr59) is a Phosphothreonine; by autocatalysis. The tract at residues 103-220 is cGMP-binding, high affinity; sequence FMKNLELSQI…EYMEFLKSVP (118 aa). Residues 167 to 170 and 177 to 178 contribute to the 3',5'-cyclic AMP site; these read GELA and RT. Residues 167–170, 177–178, Arg282, 291–294, 301–302, and Tyr336 each bind 3',5'-cyclic GMP; these read GELA, RT, and GEKA. Residues 221 to 341 are cGMP-binding, low affinity; it reads TFQSLPEEIL…SNKAYEDAEA (121 aa). The Protein kinase domain occupies 360–619; the sequence is FNIIDTLGVG…VKDIQKHKWF (260 aa). ATP contacts are provided by residues 366–374 and Lys390; that span reads LGVGGFGRV. The active-site Proton acceptor is the Asp484. Position 515 is a phosphothreonine (Thr515). An AGC-kinase C-terminal domain is found at 620–671; it reads EGFNWEGLRKGTLTPPIIPSVASPTDTSNFDSFPEDNDEPPPDDNSGWDIDF. Residues 635–671 form a disordered region; the sequence is PIIPSVASPTDTSNFDSFPEDNDEPPPDDNSGWDIDF. Acidic residues predominate over residues 652 to 661; sequence FPEDNDEPPP.

It belongs to the protein kinase superfamily. AGC Ser/Thr protein kinase family. cGMP subfamily. In terms of assembly, isoform alpha: parallel homodimer or heterodimer and also heterotetramer. Interacts directly with PPP1R12A. Non-covalent dimer of dimer of PRKG1-PRKG1 and PPP1R12A-PPP1R12A. This interaction targets PRKG1 to stress fibers to mediate smooth muscle cell relaxation and vasodilation in responses to rises in cGMP. Isoform beta: antiparallel homodimer. Part of cGMP kinase signaling complex at least composed of ACTA2/alpha-actin, CNN1/calponin H1, PLN/phospholamban, PRKG1 and ITPR1. Interacts with IRAG1. Forms a stable complex with ITPR1, IRAG1, and isoform beta of PRKG1. Interacts with TRPC7 (via ankyrin repeat domain). Isoform alpha interacts with RGS2. Interacts with GTF2I. Autophosphorylation increases kinase activity. In terms of processing, 65 kDa monomer is produced by proteolytic cleavage. In terms of tissue distribution, high concentrations are detected in various smooth muscle: lung, rumen, trachea, aorta, uterus and stomach. Isoform alpha is expressed predominantly in heart, cerebellum and lung, whereas the beta isoform is expressed in high concentrations in trachea, aorta, stomach and uterus.

It localises to the cytoplasm. It carries out the reaction L-seryl-[protein] + ATP = O-phospho-L-seryl-[protein] + ADP + H(+). The enzyme catalyses L-threonyl-[protein] + ATP = O-phospho-L-threonyl-[protein] + ADP + H(+). Its activity is regulated as follows. In the absence of cGMP, PRKG1 activity is suppressed by autoinhibitory contacts. Serine/threonine protein kinase that acts as a key mediator of the nitric oxide (NO)/cGMP signaling pathway. GMP binding activates PRKG1, which phosphorylates serines and threonines on many cellular proteins. Numerous protein targets for PRKG1 phosphorylation are implicated in modulating cellular calcium, but the contribution of each of these targets may vary substantially among cell types. Proteins that are phosphorylated by PRKG1 regulate platelet activation and adhesion, smooth muscle contraction, cardiac function, gene expression, feedback of the NO-signaling pathway, and other processes involved in several aspects of the CNS like axon guidance, hippocampal and cerebellar learning, circadian rhythm and nociception. Smooth muscle relaxation is mediated through lowering of intracellular free calcium, by desensitization of contractile proteins to calcium, and by decrease in the contractile state of smooth muscle or in platelet activation. Regulates intracellular calcium levels via several pathways: phosphorylates IRAG1 and inhibits IP3-induced Ca(2+) release from intracellular stores, phosphorylation of KCNMA1 (BKCa) channels decreases intracellular Ca(2+) levels, which leads to increased opening of this channel. PRKG1 phosphorylates the canonical transient receptor potential channel (TRPC) family which inactivates the associated inward calcium current. Another mode of action of NO/cGMP/PKGI signaling involves PKGI-mediated inactivation of the Ras homolog gene family member A (RhoA). Phosphorylation of RHOA by PRKG1 blocks the action of this protein in myriad processes: regulation of RHOA translocation; decreasing contraction; controlling vesicle trafficking, reduction of myosin light chain phosphorylation resulting in vasorelaxation. Activation of PRKG1 by NO signaling also alters gene expression in a number of tissues. In smooth muscle cells, increased cGMP and PRKG1 activity influence expression of smooth muscle-specific contractile proteins, levels of proteins in the NO/cGMP signaling pathway, down-regulation of the matrix proteins osteopontin and thrombospondin-1 to limit smooth muscle cell migration and phenotype. Regulates vasodilator-stimulated phosphoprotein (VASP) functions in platelets and smooth muscle. This Bos taurus (Bovine) protein is cGMP-dependent protein kinase 1 (PRKG1).